The primary structure comprises 323 residues: Prenyl transferase (323 aa).

Isopentenyl diphosphate contacts are provided by K46, R49, and H81. The Mg(2+) site is built by D88 and D92. R97 is a binding site for an all-trans-polyprenyl diphosphate. R98 contributes to the isopentenyl diphosphate binding site. Positions 174, 175, and 212 each coordinate an all-trans-polyprenyl diphosphate.

It belongs to the FPP/GGPP synthase family. Requires Mg(2+) as cofactor.

The protein resides in the plastid. Its subcellular location is the chloroplast. Its function is as follows. Possible role in synthesis of the nonaprenyl side chain of plastoquinone or in synthesis of other prenyl chains such as undekaprenyl pyrophosphate. The protein is Prenyl transferase (preA) of Porphyra purpurea (Red seaweed).